The chain runs to 520 residues: Nucleobase-ascorbate transporter 1 (520 aa).

Transmembrane regions (helical) follow at residues 36 to 56 (YILM…AMGG), 64 to 84 (VIQT…LFGT), 86 to 106 (LPAV…IIND), 129 to 149 (ALIV…WGLF), 150 to 170 (SRFF…LGMF), 174 to 194 (FPQL…VIGL), 213 to 233 (FPIL…TASG), 279 to 299 (FAMM…YIAA), 362 to 382 (GFMI…SIPV), 384 to 404 (IYAA…LSFL), 415 to 435 (LMIT…FAQY), and 453 to 473 (AFLN…AVFM).

It belongs to the nucleobase:cation symporter-2 (NCS2) (TC 2.A.40) family. In terms of tissue distribution, expressed in cotyledons 4 days after imbibition (DAI). Expressed in the minor and major veins of cotyledons and leaves, in the shoot apex and pedicels. Expressed in the root meristems, root tips and lateral root primordia.

The protein localises to the membrane. In Arabidopsis thaliana (Mouse-ear cress), this protein is Nucleobase-ascorbate transporter 1 (NAT1).